The chain runs to 272 residues: Merozoite surface protein 2 (272 aa).

The first 20 residues, 1-20 (MKVIKTLSIINFFIFVTFNI), serve as a signal peptide directing secretion. Asparagine 22 and asparagine 36 each carry an N-linked (GlcNAc...) asparagine glycan. The tract at residues 44 to 198 (AESKPSTGAG…EQTESPELQS (155 aa)) is polymorphic region. Positions 45–233 (ESKPSTGAGG…DSQKECTDGN (189 aa)) are disordered. Gly residues predominate over residues 51-82 (GAGGSAGGSAGGSAGGSAGGSAGGSAGSGDGN). Repeat copies occupy residues 53–56 (GGSA), 57–60 (GGSA), 61–64 (GGSA), 65–68 (GGSA), 69–72 (GGSA), and 73–76 (GGSA). The segment at 53–76 (GGSAGGSAGGSAGGSAGGSAGGSA) is 6 X 4 AA tandem repeats of G-G-S-A. Low complexity predominate over residues 83-119 (GADAEGSSSTPATTTTTKTTTTTTTTNDAEASTSTSS). Basic and acidic residues predominate over residues 122-137 (PNHKNAETNPKGKGEV). 2 stretches are compositionally biased toward polar residues: residues 139–165 (EPNQANKETQNNSNVQQDSQTKSNVPP) and 172–200 (KSPTAQPEQAENSAPTAEQTESPELQSAP). N-linked (GlcNAc...) asparagine glycosylation is present at asparagine 149. Asparagine 221 is a glycosylation site (N-linked (GlcNAc...) asparagine). A disulfide bond links cysteine 229 and cysteine 237. N-linked (GlcNAc...) asparagine glycans are attached at residues asparagine 245 and asparagine 246. Asparagine 246 carries GPI-anchor amidated asparagine lipidation. Residues 247 to 272 (SSNIASINKFVVLISATLVLSFAIFI) constitute a propeptide, removed in mature form.

It is found in the cell membrane. Functionally, may play a role in the merozoite attachment to the erythrocyte. The polypeptide is Merozoite surface protein 2 (Plasmodium falciparum (isolate 3D7)).